Here is a 377-residue protein sequence, read N- to C-terminus: Lactosylceramide 1,3-N-acetyl-beta-D-glucosaminyltransferase B (377 aa).

Residues 1–13 (MLISARRLRRCQS) are Cytoplasmic-facing. Residues 14-30 (LQLLASCFVLSLMALLV) traverse the membrane as a helical; Signal-anchor for type II membrane protein segment. Residues 31-377 (QEDNSLVNHV…DTYPCSAAWS (347 aa)) lie on the Lumenal side of the membrane. Residues Asn56, Asn167, and Asn275 are each glycosylated (N-linked (GlcNAc...) asparagine).

The protein belongs to the glycosyltransferase 31 family.

It is found in the golgi apparatus membrane. It catalyses the reaction a beta-D-Gal-(1-&gt;4)-beta-D-Glc-(1&lt;-&gt;1)-Cer(d18:1(4E)) + UDP-N-acetyl-alpha-D-glucosamine = a beta-D-GlcNAc-(1-&gt;3)-beta-D-Gal-(1-&gt;4)-beta-D-Glc-(1&lt;-&gt;1)-Cer(d18:1(4E)) + UDP + H(+). The enzyme catalyses a neolactoside nLc4Cer(d18:1(4E)) + UDP-N-acetyl-alpha-D-glucosamine = a neolactoside IV(3)-beta-GlcNAc-nLc4Cer(d18:1(4E)) + UDP + H(+). The protein operates within protein modification; protein glycosylation. Beta-1,3-N-acetylglucosaminyltransferase that plays a key role in the synthesis of lacto- or neolacto-series carbohydrate chains on glycolipids. In Xenopus laevis (African clawed frog), this protein is Lactosylceramide 1,3-N-acetyl-beta-D-glucosaminyltransferase B (b3gnt5-b).